We begin with the raw amino-acid sequence, 506 residues long: Catalase (506 aa).

Residues H73 and N146 contribute to the active site. Position 356 (Y356) interacts with heme. The short motif at 504 to 506 (SKF) is the Microbody targeting signal element.

The protein belongs to the catalase family. Homotetramer. The cofactor is heme.

The protein resides in the peroxisome matrix. It catalyses the reaction 2 H2O2 = O2 + 2 H2O. In terms of biological role, catalyzes the degradation of hydrogen peroxide (H(2)O(2)) generated by peroxisomal oxidases to water and oxygen, thereby protecting cells from the toxic effects of hydrogen peroxide. The polypeptide is Catalase (Cat) (Drosophila melanogaster (Fruit fly)).